Consider the following 263-residue polypeptide: ATP synthase subunit a (263 aa).

6 helical membrane-spanning segments follow: residues 26-46 (VHLD…FFFS), 86-106 (VAPL…IDLI), 130-150 (DISA…FYTI), 166-186 (PFNH…TLLA), 195-215 (LFGN…MYMA), and 229-249 (LAWA…FMML).

This sequence belongs to the ATPase A chain family. As to quaternary structure, F-type ATPases have 2 components, CF(1) - the catalytic core - and CF(0) - the membrane proton channel. CF(1) has five subunits: alpha(3), beta(3), gamma(1), delta(1), epsilon(1). CF(0) has three main subunits: a(1), b(2) and c(9-12). The alpha and beta chains form an alternating ring which encloses part of the gamma chain. CF(1) is attached to CF(0) by a central stalk formed by the gamma and epsilon chains, while a peripheral stalk is formed by the delta and b chains.

The protein resides in the cell inner membrane. In terms of biological role, key component of the proton channel; it plays a direct role in the translocation of protons across the membrane. The polypeptide is ATP synthase subunit a (Glaesserella parasuis serovar 5 (strain SH0165) (Haemophilus parasuis)).